Reading from the N-terminus, the 231-residue chain is MAETLAHRFTEFLLESNALKFGDFTLKSGRKSPYFINAGAFDDGKKIAALGAFYAEKISQAIVHNTIPRNIDTVFGPAYKGIPLAVSTAIALTAGHNMTVGYTFDRKEKKDHGDGGWMVGTPLTDGMKVLLVDDVMTAGTAVREVIPKLKAEANVEVVGLVLSVDRMEKTKDSDLSAVKAVEAEFGFPVLAIANVREIFDAAAKMKNADSAPLLSHDIQQRAAAYLEEYGA.

Residues lysine 27, 79–80, arginine 106, lysine 107, lysine 110, histidine 112, and 133–141 each bind 5-phospho-alpha-D-ribose 1-diphosphate; these read YK and DDVMTAGTA. Threonine 137 and arginine 166 together coordinate orotate.

The protein belongs to the purine/pyrimidine phosphoribosyltransferase family. PyrE subfamily. As to quaternary structure, homodimer. It depends on Mg(2+) as a cofactor.

It catalyses the reaction orotidine 5'-phosphate + diphosphate = orotate + 5-phospho-alpha-D-ribose 1-diphosphate. The protein operates within pyrimidine metabolism; UMP biosynthesis via de novo pathway; UMP from orotate: step 1/2. Functionally, catalyzes the transfer of a ribosyl phosphate group from 5-phosphoribose 1-diphosphate to orotate, leading to the formation of orotidine monophosphate (OMP). The chain is Orotate phosphoribosyltransferase from Bifidobacterium longum (strain DJO10A).